The following is a 232-amino-acid chain: Early E1A protein (232 aa).

An interaction with RB1 in competition with E2F1 region spans residues 40–48; it reads PTLHDLFDV. Low complexity predominate over residues 69 to 84; sequence TDSSASTEADSGFSPL. Residues 69–97 form a disordered region; that stretch reads TDSSASTEADSGFSPLSTPPVSPIPPHPT. Residues 85–97 are compositionally biased toward pro residues; sequence STPPVSPIPPHPT. Residues 107–111 carry the LXCXE motif, interaction with host RB1 motif; the sequence is LLCLE. The segment at 146-164 is a zinc-finger region; that stretch reads CLRCAFYQEQDDNALCGLC. Residues 175–232 form a disordered region; it reads SAGAEEEDDEVIFVSAKPGGRKRSAATPCEPDGVSKRPCVPEPEQTEPLDLSLKPRPN. The PXDLS motif, CTBP-binding signature appears at 222-226; the sequence is PLDLS. Residues 228–232 carry the Nuclear localization signal motif; sequence KPRPN.

Belongs to the adenoviridae E1A protein family. In terms of assembly, interacts with host UBE2I; this interaction interferes with polySUMOylation. Interacts with host RB1; this interaction induces the aberrant dissociation of RB1-E2F1 complex thereby disrupting the activity of RB1 and activating E2F1-regulated genes. Interacts with host ATF7; the interaction enhances ATF7-mediated viral transactivation activity which requires the zinc binding domains of both proteins. Isoform early E1A 32 kDa protein and isoform early E1A 26 kDa protein interact (via N-terminus) with CUL1 and E3 ubiquitin ligase RBX1; these interactions inhibit RBX1-CUL1-dependent elongation reaction of ubiquitin chains and attenuate ubiquitination of SCF(FBXW7) target proteins. Interacts (via PXLXP motif) with host ZMYND11/BS69 (via MYND-type zinc finger); this interaction inhibits E1A mediated transactivation. Interacts with host EP300; this interaction stimulates the acetylation of RB1 by recruiting EP300 and RB1 into a multimeric-protein complex. Interacts with host CTBP1 and CTBP2; this interaction seems to potentiate viral replication. Interacts with host DCAF7. Interacts with host DYRK1A. Interacts with host KPNA4; this interaction allows E1A import into the host nucleus. Interacts with host EP400; this interaction stabilizes MYC. Interacts with host TBP protein; this interaction probably disrupts the TBP-TATA complex.

It localises to the host nucleus. Its function is as follows. Plays a role in viral genome replication by driving entry of quiescent cells into the cell cycle. Stimulation of progression from G1 to S phase allows the virus to efficiently use the cellular DNA replicating machinery to achieve viral genome replication. E1A protein has both transforming and trans-activating activities. Induces the disassembly of the E2F1 transcription factor from RB1 by direct competition for the same binding site on RB1, with subsequent transcriptional activation of E2F1-regulated S-phase genes and of the E2 region of the adenoviral genome. Release of E2F1 leads to the ARF-mediated inhibition of MDM2 and causes TP53/p53 to accumulate because it is not targeted for degradation by MDM2-mediated ubiquitination anymore. This increase in TP53, in turn, would arrest the cell proliferation and direct its death but this effect is counteracted by the viral protein E1B-55K. Inactivation of the ability of RB1 to arrest the cell cycle is critical for cellular transformation, uncontrolled cellular growth and proliferation induced by viral infection. Interaction with RBX1 and CUL1 inhibits ubiquitination of the proteins targeted by SCF(FBXW7) ubiquitin ligase complex, and may be linked to unregulated host cell proliferation. The tumorigenesis-restraining activity of E1A may be related to the disruption of the host CtBP-CtIP complex through the CtBP binding motif. This chain is Early E1A protein, found in Canine adenovirus serotype 2 (strain Toronto A 26-61) (CAdV-2).